A 201-amino-acid chain; its full sequence is Peroxiredoxin-2F, mitochondrial (201 aa).

The transit peptide at 1–30 (MAMSILKLRNLSALRSAANSARIGVSSRGF) directs the protein to the mitochondrion. At Thr37 the chain carries Phosphothreonine. The 165-residue stretch at 37–201 (TDITSAAPGV…TGAEVILGQI (165 aa)) folds into the Thioredoxin domain. Residue Cys89 is the Cysteine sulfenic acid (-SOH) intermediate of the active site. Ser149 carries the post-translational modification Phosphoserine.

The protein belongs to the peroxiredoxin family. Prx5 subfamily. In terms of assembly, monomer. As to expression, expressed in the whole plant.

It localises to the mitochondrion matrix. The enzyme catalyses [glutaredoxin]-dithiol + a hydroperoxide = [glutaredoxin]-disulfide + an alcohol + H2O. Functionally, thiol-specific peroxidase that catalyzes the reduction of hydrogen peroxide and organic hydroperoxides to water and alcohols, respectively. Plays a role in cell protection against oxidative stress by detoxifying peroxides. Reduces preferentially hydrogen peroxide rather than alkyl peroxides. May be involved in mitochondrial redox homeostasis. This Arabidopsis thaliana (Mouse-ear cress) protein is Peroxiredoxin-2F, mitochondrial (PRXIIF).